The primary structure comprises 299 residues: Meso-diaminopimelate D-dehydrogenase (299 aa).

Residues 11–14 (YGNI), Arg-36, 67–70 (CTPT), 90–92 (SFD), and 119–123 (AGWDP) each bind NADP(+). Residues Asp-92, Asp-122, Phe-146, 152-153 (MG), Thr-171, Arg-181, His-227, and Asn-253 each bind substrate.

It belongs to the diaminopimelate dehydrogenase family. As to quaternary structure, homodimer.

The catalysed reaction is meso-2,6-diaminopimelate + NADP(+) + H2O = (S)-2-amino-6-oxoheptanedioate + NH4(+) + NADPH + H(+). The protein operates within amino-acid biosynthesis; L-lysine biosynthesis via DAP pathway; DL-2,6-diaminopimelate from (S)-tetrahydrodipicolinate: step 1/1. Functionally, catalyzes the reversible NADPH-dependent reductive amination of L-2-amino-6-oxopimelate, the acyclic form of L-tetrahydrodipicolinate, to generate the meso compound, D,L-2,6-diaminopimelate. Probably plays a role in lysine biosynthesis. Exhibits a high substrate specificity for meso-2,6-diaminopimelate (m-DAP), since the activity with L,L-2,6-diaminopimelate is less than 5% of the activity observed with m-DAP. Can use NAD(+) only very poorly since the activity observed in the presence of NAD(+) is about 14% of that with NADP(+). This chain is Meso-diaminopimelate D-dehydrogenase (ddh), found in Bacteroides fragilis (strain ATCC 25285 / DSM 2151 / CCUG 4856 / JCM 11019 / LMG 10263 / NCTC 9343 / Onslow / VPI 2553 / EN-2).